Here is a 30-residue protein sequence, read N- to C-terminus: Cyclotide hyen-C (30 aa).

A cross-link (cyclopeptide (Gly-Asn)) is located at residues 1–30 (GTHPCQETCVTSTRCSTQGCHCNWPICFKN). 3 disulfides stabilise this stretch: Cys-5–Cys-20, Cys-9–Cys-22, and Cys-15–Cys-27.

This is a cyclic peptide. As to expression, detected in stems (at protein level).

Probably participates in a plant defense mechanism. Does not display any cytotoxic activity towards K562, HeLa, MCF-7, HUVEC or red blood cells. Does not bind to phospholipd membranes containing 1-palmitoyl 2-oleoyl phosphatidylcholine (POPC) or 1-palmitoyl-2-oleophosphatidylethanolamine (POPE). The sequence is that of Cyclotide hyen-C from Pigea enneasperma (Spade flower).